A 1471-amino-acid polypeptide reads, in one-letter code: ABC multidrug transporter F (1471 aa).

The span at 1–19 (MALNSTDNRWSTGEDTPSE) shows a compositional bias: polar residues. Positions 1–40 (MALNSTDNRWSTGEDTPSEAQLPDGEERLDAAPDEKVTAE) are disordered. Asparagine 4 is a glycosylation site (N-linked (GlcNAc...) asparagine). Residues 25 to 40 (GEERLDAAPDEKVTAE) are compositionally biased toward basic and acidic residues. N-linked (GlcNAc...) asparagine glycosylation is found at asparagine 71 and asparagine 311. In terms of domain architecture, ABC transporter 1 spans 133-387 (LKVPTMVRQA…FEQLGFQCPE (255 aa)). A helical membrane pass occupies residues 498–518 (VTLAMLIGNFFEALIIASIFY). The N-linked (GlcNAc...) asparagine glycan is linked to asparagine 519. A run of 5 helical transmembrane segments spans residues 532–552 (ALLFMMVLLNAFASVLEILTL), 578–598 (FIMSLPYKFVNSSLVNLTLYF), 607–627 (GPFFFFLLISTSMMLAMSMFF), 641–661 (LAPSSIILLALVLYTGFTIPV), and 751–771 (IIIAMTVFLAVCHFVTTELVA). The tract at residues 791 to 819 (RAKQGQRDEEQPSASAVPSEKYSEAPTPV) is disordered. The 243-residue stretch at 829–1071 (FHWEDVCYDV…TLMDYFVRNG (243 aa)) folds into the ABC transporter 2 domain. An N-linked (GlcNAc...) asparagine glycan is attached at asparagine 842. Position 865–872 (865–872 (GVSGAGKT)) interacts with ATP. 5 consecutive transmembrane segments (helical) span residues 1167-1187 (YLYSKAILTVGSSIFIGFSFF), 1201-1221 (FGVFVFLFVVIQLIFQIIPTF), 1252-1272 (FAWNTIAAVLCFLAWFYPVGL), 1288-1308 (LVFLIIWATFLFASSFAHLLI), and 1326-1346 (IMMYAFCGILAGPHALPGFWI). Asparagine 1386, asparagine 1422, and asparagine 1429 each carry an N-linked (GlcNAc...) asparagine glycan. Residues 1441-1461 (FGLLWVYVAVNTFGAVFLYWL) traverse the membrane as a helical segment.

This sequence belongs to the ABC transporter superfamily. ABCG family. PDR (TC 3.A.1.205) subfamily.

The protein resides in the cell membrane. The catalysed reaction is fluconazole(in) + ATP + H2O = fluconazole(out) + ADP + phosphate + H(+). It catalyses the reaction itraconazole(in) + ATP + H2O = itraconazole(out) + ADP + phosphate + H(+). Its activity is regulated as follows. The efflux inhibitor FK506 impairs the transport activity. Pleiotropic ABC efflux transporter that shows a strong substrate specificity for the azole class of drugs such as lotrimazole (CLT), fluconazole (FLC), itraconazole (ITC), ketoconazole (KTC), posaconazole (POS), econazole (ECON), metconazole (MET), miconazole (MCZ), prochloraz (PCLZ), and tebuconazole (TEBZ). This is ABC multidrug transporter F from Aspergillus fumigatus (strain ATCC MYA-4609 / CBS 101355 / FGSC A1100 / Af293) (Neosartorya fumigata).